The sequence spans 148 residues: Cytochrome c-type biogenesis protein CcmE (148 aa).

Over 1–7 the chain is Cytoplasmic; sequence MTRKQRR. A helical; Signal-anchor for type II membrane protein membrane pass occupies residues 8–28; that stretch reads LYFVLLGMAALGGAVALVLTA. The Periplasmic portion of the chain corresponds to 29 to 148; that stretch reads ISDSLVYFYS…QWNDGKQPKQ (120 aa). Heme contacts are provided by H121 and Y125.

Belongs to the CcmE/CycJ family.

It localises to the cell inner membrane. Its function is as follows. Heme chaperone required for the biogenesis of c-type cytochromes. Transiently binds heme delivered by CcmC and transfers the heme to apo-cytochromes in a process facilitated by CcmF and CcmH. The sequence is that of Cytochrome c-type biogenesis protein CcmE from Paramagnetospirillum magneticum (strain ATCC 700264 / AMB-1) (Magnetospirillum magneticum).